Here is a 494-residue protein sequence, read N- to C-terminus: Gabija protein GajB (494 aa).

Residues 1-229 form the UvrD-like helicase ATP-binding domain; it reads MSREQIIKDG…YHLTSNFRCC (229 aa). 17–24 serves as a coordination point for ATP; the sequence is AGAGSGKT.

It belongs to the helicase family. In terms of assembly, homodimer. Interacts with GajA; 2 GajB dimers dock at opposite sides of the GajA complex to form a 4:4 GajA-GajB assembly (GajAB). GajAB interacts with Bacillus phage Phi3T Gad1 protein; this interaction forms a 4:4:8 GajAB-Gad1 complex and leads to GajAB inhibition.

Its function is as follows. Component of antiviral defense system Gabija type I, composed of GajA and GajB. Expression of Gabija type I in B.subtilis (strain BEST7003) confers resistance to phages phi105, phi29, rho14, SpBeta and SBSphiC. Expression of Gabija type I in E.coli B (strain ATCC 11303) confers resistance to phage T7. May be a helicase or contribute to GajA activation. In Bacillus cereus (strain VD045), this protein is Gabija protein GajB.